The primary structure comprises 356 residues: 3-dehydroquinate synthase (356 aa).

Residues 106–110 (GVVGD), 130–131 (TT), Lys143, and Lys152 contribute to the NAD(+) site. Positions 185, 248, and 265 each coordinate Zn(2+).

It belongs to the sugar phosphate cyclases superfamily. Dehydroquinate synthase family. Requires NAD(+) as cofactor. Co(2+) is required as a cofactor. It depends on Zn(2+) as a cofactor.

It localises to the cytoplasm. It carries out the reaction 7-phospho-2-dehydro-3-deoxy-D-arabino-heptonate = 3-dehydroquinate + phosphate. It participates in metabolic intermediate biosynthesis; chorismate biosynthesis; chorismate from D-erythrose 4-phosphate and phosphoenolpyruvate: step 2/7. In terms of biological role, catalyzes the conversion of 3-deoxy-D-arabino-heptulosonate 7-phosphate (DAHP) to dehydroquinate (DHQ). The polypeptide is 3-dehydroquinate synthase (Caldanaerobacter subterraneus subsp. tengcongensis (strain DSM 15242 / JCM 11007 / NBRC 100824 / MB4) (Thermoanaerobacter tengcongensis)).